An 87-amino-acid chain; its full sequence is Acylphosphatase (87 aa).

Residues 2-87 (RLTALVSGHV…ETGLREFHIY (86 aa)) enclose the Acylphosphatase-like domain. Residues Arg17 and Asn35 contribute to the active site.

It belongs to the acylphosphatase family.

It carries out the reaction an acyl phosphate + H2O = a carboxylate + phosphate + H(+). The protein is Acylphosphatase (acyP) of Deinococcus radiodurans (strain ATCC 13939 / DSM 20539 / JCM 16871 / CCUG 27074 / LMG 4051 / NBRC 15346 / NCIMB 9279 / VKM B-1422 / R1).